Consider the following 838-residue polypeptide: Axin-2 (838 aa).

Residues 1-75 are disordered; that stretch reads MSSAVLVTLL…EGRASPDSPL (75 aa). A Tankyrase-binding motif motif is present at residues 21 to 30; it reads APRPPVPGEE. The segment covering 42–55 has biased composition (polar residues); the sequence is KVQSTKPMPVSSNA. A compositionally biased stretch (basic and acidic residues) spans 56 to 69; that stretch reads RRNEDGLGEPEGRA. Residues 81-200 enclose the RGS domain; that stretch reads SLHSLLGDQD…LTSDIYLEYV (120 aa). Disordered stretches follow at residues 300 to 333, 398 to 435, 450 to 483, 568 to 682, and 712 to 744; these read SELS…KKQL, IRED…EEDP, PGCQ…LLPT, GSRG…AMPP, and VASQ…DHKE. The segment covering 303-318 has biased composition (low complexity); the sequence is SSDALTDDSMSMTDSS. The interaction with GSK3B stretch occupies residues 327-413; that stretch reads MGSKKQLQRE…KEGSEQALSS (87 aa). The interaction with beta-catenin stretch occupies residues 413–476; that stretch reads SRDGAPVQHP…PDHHHHHHQQ (64 aa). A compositionally biased stretch (polar residues) spans 727–737; that stretch reads AGPTSFSNPSL. The DIX domain maps to 756–838; sequence ASELIVTYFF…RILGKVERID (83 aa).

Interacts with SMAD7 and RNF111. Interacts with ANKRD6. Interacts with glycogen synthase kinase-3 beta (GSK3B) and beta-catenin. The interaction between axin and beta-catenin occurs via the armadillo repeats contained in beta-catenin. Interacts with SIAH1. Interacts with SIAH2. Post-translationally, ADP-ribosylated by tankyrase TNKS and TNKS2. Poly-ADP-ribosylated protein is recognized by RNF146, followed by ubiquitination and subsequent activation of the Wnt signaling pathway. Ubiquitinated by RNF146 when poly-ADP-ribosylated, leading to its degradation and subsequent activation of the Wnt signaling pathway. Deubiquitinated by USP34, deubiquitinated downstream of beta-catenin stabilization step: deubiquitination is important Wnt signaling to positively regulate beta-catenin (CTNBB1)-mediated transcription. In terms of processing, probably phosphorylated by GSK3B and dephosphorylated by PP2A. As to expression, expressed in lung and thymus.

It is found in the cytoplasm. Functionally, inhibitor of the Wnt signaling pathway. Down-regulates beta-catenin. Probably facilitate the phosphorylation of beta-catenin and APC by GSK3B. This chain is Axin-2 (Axin2), found in Rattus norvegicus (Rat).